Here is a 570-residue protein sequence, read N- to C-terminus: Protein NRT1/ PTR FAMILY 8.1 (570 aa).

Thr-98 carries the post-translational modification Phosphothreonine. 10 helical membrane-spanning segments follow: residues 99–119, 140–160, 182–202, 210–230, 329–349, 377–397, 414–434, 454–474, 494–514, and 537–557; these read IATF…SASV, AVFF…KPCV, FFNW…TVLV, WGWG…FFFF, IITL…YSQM, LFDT…IIPL, MGIG…LEVV, IFWQ…TFIG, LSLT…TVVM, and YFFY…LWIS.

It belongs to the major facilitator superfamily. Proton-dependent oligopeptide transporter (POT/PTR) (TC 2.A.17) family. Expressed in cotyledons, hypocotyls, leaves, roots, flowers, pistils and vascular tissue of sepals, anthers, carpels and funiculi. Not detected in seeds.

The protein resides in the cell membrane. In terms of biological role, peptide transporter. Mediates the transport of di- and tripeptides. High affinity transporter with low selectivity. No transport of amino acids. This is Protein NRT1/ PTR FAMILY 8.1 (NPF8.1) from Arabidopsis thaliana (Mouse-ear cress).